Consider the following 359-residue polypeptide: Tropomodulin-1 (359 aa).

A disordered region spans residues 39-61; the sequence is PDNALLPAGLRQKDQTTKAPTGP. A tropomyosin-binding region spans residues 39 to 138; it reads PDNALLPAGL…CDIAAILGMH (100 aa).

It belongs to the tropomodulin family. As to quaternary structure, binds to the N-terminus of tropomyosin and to actin. Interacts with FLII.

Its subcellular location is the cytoplasm. It localises to the cytoskeleton. Functionally, blocks the elongation and depolymerization of the actin filaments at the pointed end. The Tmod/TM complex contributes to the formation of the short actin protofilament, which in turn defines the geometry of the membrane skeleton. May play an important role in regulating the organization of actin filaments by preferentially binding to a specific tropomyosin isoform at its N-terminus. This is Tropomodulin-1 (TMOD1) from Bos taurus (Bovine).